Consider the following 182-residue polypeptide: MATTRLKTLYQETIIPKLTQQFQYTNVHQVPKLVKITVNRGLGEAAQNAKSLEASLTEIATITGQKPVVTRAKKAIAGFKIRQGMPVGIMVTLRGERMYAFFDRLISLSLPRIRDFRGISPKSFDGRGNYTLGVREQLIFPEIEYDSIDQIRGLDISIITTAKNDEEGRALLKEFGMPFRDQ.

It belongs to the universal ribosomal protein uL5 family. As to quaternary structure, part of the 50S ribosomal subunit; part of the 5S rRNA/L5/L18/L25 subcomplex. Contacts the 5S rRNA and the P site tRNA. Forms a bridge to the 30S subunit in the 70S ribosome.

Functionally, this is one of the proteins that bind and probably mediate the attachment of the 5S RNA into the large ribosomal subunit, where it forms part of the central protuberance. In the 70S ribosome it contacts protein S13 of the 30S subunit (bridge B1b), connecting the 2 subunits; this bridge is implicated in subunit movement. Contacts the P site tRNA; the 5S rRNA and some of its associated proteins might help stabilize positioning of ribosome-bound tRNAs. The sequence is that of Large ribosomal subunit protein uL5 from Trichormus variabilis (strain ATCC 29413 / PCC 7937) (Anabaena variabilis).